A 275-amino-acid chain; its full sequence is Putative pyruvate, phosphate dikinase regulatory protein (275 aa).

149 to 156 (GVSRTSKT) serves as a coordination point for ADP.

This sequence belongs to the pyruvate, phosphate/water dikinase regulatory protein family. PDRP subfamily.

It carries out the reaction N(tele)-phospho-L-histidyl/L-threonyl-[pyruvate, phosphate dikinase] + ADP = N(tele)-phospho-L-histidyl/O-phospho-L-threonyl-[pyruvate, phosphate dikinase] + AMP + H(+). The catalysed reaction is N(tele)-phospho-L-histidyl/O-phospho-L-threonyl-[pyruvate, phosphate dikinase] + phosphate + H(+) = N(tele)-phospho-L-histidyl/L-threonyl-[pyruvate, phosphate dikinase] + diphosphate. Its function is as follows. Bifunctional serine/threonine kinase and phosphorylase involved in the regulation of the pyruvate, phosphate dikinase (PPDK) by catalyzing its phosphorylation/dephosphorylation. This chain is Putative pyruvate, phosphate dikinase regulatory protein, found in Levilactobacillus brevis (strain ATCC 367 / BCRC 12310 / CIP 105137 / JCM 1170 / LMG 11437 / NCIMB 947 / NCTC 947) (Lactobacillus brevis).